Here is a 334-residue protein sequence, read N- to C-terminus: Transcription initiation factor IIB (334 aa).

The TFIIB-type zinc-finger motif lies at 34–65 (TESVCPECKSRQLVHDYERAELVCQNCGLVID). Residues Cys38, Cys41, Cys57, and Cys60 each coordinate Zn(2+). 2 tandem repeats follow at residues 151–234 (SELD…SREL) and 245–326 (DYVP…ELAE).

The protein belongs to the TFIIB family.

In terms of biological role, stabilizes TBP binding to an archaeal box-A promoter. Also responsible for recruiting RNA polymerase II to the pre-initiation complex (DNA-TBP-TFIIB). The chain is Transcription initiation factor IIB from Methanosphaerula palustris (strain ATCC BAA-1556 / DSM 19958 / E1-9c).